The primary structure comprises 380 residues: Ceramide-binding protein svf1 (380 aa).

Residues 1-18 (MKAWLQSSISYYTGTAEP) are peripherally associates with membranes.

It belongs to the SVF1 family.

The protein localises to the golgi apparatus. Its subcellular location is the cis-Golgi network membrane. The protein resides in the endoplasmic reticulum membrane. It localises to the cytoplasm. It is found in the nucleus. In terms of biological role, ceramide-binding protein that may transfer ceramides from the endoplasmic reticulum membrane to the cis-Golgi network membrane, and is thereby required for the biosynthesis of complex sphingolipids. The polypeptide is Ceramide-binding protein svf1 (Schizosaccharomyces pombe (strain 972 / ATCC 24843) (Fission yeast)).